The following is a 330-amino-acid chain: tRNA U34 carboxymethyltransferase (330 aa).

Carboxy-S-adenosyl-L-methionine is bound by residues Lys91, Trp105, Lys110, Gly130, 152-154, 181-182, Met196, Tyr200, and Arg315; these read DPS and IE.

The protein belongs to the class I-like SAM-binding methyltransferase superfamily. CmoB family. In terms of assembly, homotetramer.

It carries out the reaction carboxy-S-adenosyl-L-methionine + 5-hydroxyuridine(34) in tRNA = 5-carboxymethoxyuridine(34) in tRNA + S-adenosyl-L-homocysteine + H(+). In terms of biological role, catalyzes carboxymethyl transfer from carboxy-S-adenosyl-L-methionine (Cx-SAM) to 5-hydroxyuridine (ho5U) to form 5-carboxymethoxyuridine (cmo5U) at position 34 in tRNAs. This chain is tRNA U34 carboxymethyltransferase, found in Shewanella oneidensis (strain ATCC 700550 / JCM 31522 / CIP 106686 / LMG 19005 / NCIMB 14063 / MR-1).